The sequence spans 417 residues: Frizzy aggregation protein FrzCD (417 aa).

Basic and acidic residues predominate over residues methionine 1–alanine 11. The segment at methionine 1–serine 34 is disordered. A compositionally biased stretch (low complexity) spans alanine 21–serine 34. One can recognise a Methyl-accepting transducer domain in the interval alanine 144–glutamate 380.

Belongs to the methyl-accepting chemotaxis (MCP) protein family. In terms of processing, methylated. Saturated fatty acids capric acid and lauric acid stimulate methylation. Short-chain alcohols, such as isoamyl alcohol, and some other solvents cause demethylation.

The protein localises to the cytoplasm. Methyl-accepting taxis protein necessary for the proper aggregation of cells to form fruiting bodies. Frz genes define a system of signal transduction analogous to the enterobacterial chemotaxis systems. In Myxococcus xanthus, this protein is Frizzy aggregation protein FrzCD (frzCD).